The chain runs to 328 residues: MAFVARQTFEYQMPSTWYPGHMNKTLKRLKNLTSSNDIFVEVRDARIPLTSRNYVMEDFLNKKNRIIVYNKCDLADTFHTKAKVSKHRIQNLAQQFQNVECWFKETSTPEKSAFITPYVSKAPYFAKELLRLIRTLVDQASANGRVYVYFVGMPNTGKSSILNSLRNVALRKSKSAIVGNYPGVTKRISEIVRLFNDMDVYMLDTPGIMTPSITKPEDMLKLSLVGCVKEGIVHPVTVVDYLLFHLNRIDPSLYSKWSLPTNDVDEFLQNTAYKARKLTKGGFDENFVSNYVIQQYRIGRLGRFQLDTIDKNELLIRLHNEQNKKNAK.

Positions 23-211 constitute a CP-type G domain; that stretch reads NKTLKRLKNL…MLDTPGIMTP (189 aa). GTP-binding positions include 70–73, 155–160, and G207; these read NKCD and NTGKSS.

Belongs to the TRAFAC class YlqF/YawG GTPase family. MTG1 subfamily.

The protein localises to the mitochondrion inner membrane. Functionally, mitochondrial GTPase involved in assembly of the large ribosomal subunit. Plays a role in expression of the mitochondrial translational machinery. This chain is Mitochondrial GTPase 1 (mtg1), found in Schizosaccharomyces pombe (strain 972 / ATCC 24843) (Fission yeast).